The sequence spans 269 residues: Polyamine aminopropyltransferase (269 aa).

One can recognise a PABS domain in the interval Met-1–Glu-226. Gln-28 provides a ligand contact to S-methyl-5'-thioadenosine. Spermidine is bound by residues His-59 and Asp-83. S-methyl-5'-thioadenosine is bound by residues Asp-102 and Asp-133–Gly-134. Residue Asp-150 is the Proton acceptor of the active site. Asp-150 to Asp-153 contacts spermidine.

The protein belongs to the spermidine/spermine synthase family. In terms of assembly, homodimer or homotetramer.

Its subcellular location is the cytoplasm. It carries out the reaction S-adenosyl 3-(methylsulfanyl)propylamine + putrescine = S-methyl-5'-thioadenosine + spermidine + H(+). It participates in amine and polyamine biosynthesis; spermidine biosynthesis; spermidine from putrescine: step 1/1. Catalyzes the irreversible transfer of a propylamine group from the amino donor S-adenosylmethioninamine (decarboxy-AdoMet) to putrescine (1,4-diaminobutane) to yield spermidine. This Archaeoglobus fulgidus (strain ATCC 49558 / DSM 4304 / JCM 9628 / NBRC 100126 / VC-16) protein is Polyamine aminopropyltransferase.